The chain runs to 200 residues: Recombination protein RecR (200 aa).

Residues 58–73 form a C4-type zinc finger; sequence CEVCHNLAEEGLCAIC. Residues 81–176 form the Toprim domain; the sequence is GLICVVEEPV…DISRLAYGMP (96 aa).

It belongs to the RecR family.

In terms of biological role, may play a role in DNA repair. It seems to be involved in an RecBC-independent recombinational process of DNA repair. It may act with RecF and RecO. In Magnetococcus marinus (strain ATCC BAA-1437 / JCM 17883 / MC-1), this protein is Recombination protein RecR.